The chain runs to 331 residues: Aspartate carbamoyltransferase catalytic subunit (331 aa).

2 residues coordinate carbamoyl phosphate: Arg-76 and Thr-77. An L-aspartate-binding site is contributed by Lys-104. Residues Arg-126, His-154, and Gln-157 each contribute to the carbamoyl phosphate site. L-aspartate contacts are provided by Arg-187 and Arg-246. Carbamoyl phosphate-binding residues include Gly-287 and Pro-288.

It belongs to the aspartate/ornithine carbamoyltransferase superfamily. ATCase family. As to quaternary structure, heterododecamer (2C3:3R2) of six catalytic PyrB chains organized as two trimers (C3), and six regulatory PyrI chains organized as three dimers (R2).

The catalysed reaction is carbamoyl phosphate + L-aspartate = N-carbamoyl-L-aspartate + phosphate + H(+). Its pathway is pyrimidine metabolism; UMP biosynthesis via de novo pathway; (S)-dihydroorotate from bicarbonate: step 2/3. In terms of biological role, catalyzes the condensation of carbamoyl phosphate and aspartate to form carbamoyl aspartate and inorganic phosphate, the committed step in the de novo pyrimidine nucleotide biosynthesis pathway. The polypeptide is Aspartate carbamoyltransferase catalytic subunit (Dehalococcoides mccartyi (strain CBDB1)).